Reading from the N-terminus, the 287-residue chain is Nuclease S1 (287 aa).

The first 20 residues, 1 to 20 (MPRLLPISAATLALAQLTYG), serve as a signal peptide directing secretion. A divalent metal cation-binding residues include tryptophan 21, histidine 26, aspartate 65, and histidine 80. Residues 21–26 (WGNLGH), 65–71 (DTYKYTD), 80–83 (HFID), and 93–98 (GVDYDR) contribute to the substrate site. 2 disulfide bridges follow: cysteine 92–cysteine 236 and cysteine 100–cysteine 105. N-linked (GlcNAc...) asparagine glycans are attached at residues asparagine 112 and asparagine 122. 5 residues coordinate a divalent metal cation: histidine 135, aspartate 139, histidine 145, histidine 168, and aspartate 172. The segment at 135 to 183 (HIIGDIHQPLHDENLEAGGNGIDVTYDGETTNLHHIWDTNMPEEAAGGY) is substrate binding. The N-linked (GlcNAc...) asparagine glycan is linked to asparagine 248.

This sequence belongs to the nuclease type I family. Monomer. Zn(2+) is required as a cofactor.

It catalyses the reaction Endonucleolytic cleavage to 5'-phosphomononucleotide and 5'-phosphooligonucleotide end-products.. Its activity is regulated as follows. Inhibited by inorganic phosphate (Pi). Its function is as follows. Hydrolyzes only single-stranded DNA and RNA without apparent specificity for bases. The polypeptide is Nuclease S1 (Aspergillus oryzae (strain ATCC 42149 / RIB 40) (Yellow koji mold)).